Reading from the N-terminus, the 283-residue chain is MMRILLFLATNMAVMLVLGIILSVTGIAGNSTGGILIMALLFGFAGSLISLFLSKTMALRSVDGEVITQPRNQTERWLIDTVSRQAQKAGIPMPDVAIYHSPDVNAFATGATKSNSLVAVSTGLLNNMTEAEAEAVLAHEISHISNGDMVTMALLQGVLNTFVIFLSRVIATAVASSRNNNGEETRSSGIYFLVSMVLEMLFGVLASIIAMWFSRYREFRADAGSASLVGKEKMIMALQRLQQLHEHQNLEGSLNAFMINGKRSELFMSHPPLEKRIEALRNL.

A run of 2 helical transmembrane segments spans residues 4–24 and 33–53; these read ILLFLATNMAVMLVLGIILSV and GGILIMALLFGFAGSLISLFL. H139 is a Zn(2+) binding site. E140 is a catalytic residue. Residue H143 coordinates Zn(2+). A run of 2 helical transmembrane segments spans residues 147–167 and 190–210; these read GDMVTMALLQGVLNTFVIFLS and IYFLVSMVLEMLFGVLASIIA. Zn(2+) is bound at residue E218.

It belongs to the peptidase M48B family. Zn(2+) is required as a cofactor.

The protein resides in the cell inner membrane. The protein is Protease HtpX of Haemophilus influenzae (strain PittEE).